A 624-amino-acid polypeptide reads, in one-letter code: Phosphomethylpyrimidine synthase (624 aa).

Substrate-binding positions include Asn-231, Met-260, Tyr-289, His-325, 345–347, 386–389, and Glu-425; these read SRG and DGLR. Zn(2+) is bound at residue His-429. Residue Tyr-452 participates in substrate binding. His-493 lines the Zn(2+) pocket. Residues Cys-573, Cys-576, and Cys-581 each contribute to the [4Fe-4S] cluster site.

The protein belongs to the ThiC family. As to quaternary structure, homodimer. [4Fe-4S] cluster is required as a cofactor.

The catalysed reaction is 5-amino-1-(5-phospho-beta-D-ribosyl)imidazole + S-adenosyl-L-methionine = 4-amino-2-methyl-5-(phosphooxymethyl)pyrimidine + CO + 5'-deoxyadenosine + formate + L-methionine + 3 H(+). Its pathway is cofactor biosynthesis; thiamine diphosphate biosynthesis. In terms of biological role, catalyzes the synthesis of the hydroxymethylpyrimidine phosphate (HMP-P) moiety of thiamine from aminoimidazole ribotide (AIR) in a radical S-adenosyl-L-methionine (SAM)-dependent reaction. In Myxococcus xanthus (strain DK1622), this protein is Phosphomethylpyrimidine synthase.